A 276-amino-acid chain; its full sequence is Elongation factor Ts (276 aa).

Positions 76–79 (TDFV) are involved in Mg(2+) ion dislocation from EF-Tu.

Belongs to the EF-Ts family.

It localises to the cytoplasm. Functionally, associates with the EF-Tu.GDP complex and induces the exchange of GDP to GTP. It remains bound to the aminoacyl-tRNA.EF-Tu.GTP complex up to the GTP hydrolysis stage on the ribosome. This Mycobacterium leprae (strain Br4923) protein is Elongation factor Ts.